Consider the following 71-residue polypeptide: MKRVALQSSSLRSLGYDPEQQILEVEFSSGALYRYEAVPPEVVQALLEADSLGRHFNQVFKPQHYRYWRID.

This is an uncharacterized protein from Stutzerimonas stutzeri (strain A1501) (Pseudomonas stutzeri).